The sequence spans 341 residues: MANVAVIGAGSWGTAISLVLADNGHDVLLYGREQEHVDEINSSHTNSFYLKDAPLPESIRATTNLKEALDGRSIVFLVVPSSAIRPVSKELNTLLTEPVTIVHAAKGIEPKTHERLSEIIAEEIEPAKRRAIGVLTGPTHAEEVAVRKPTTITIACADLDVADEVQELLTNDQFRVYLNSDVVGAEYGGALKNIIALAAGMTDGLGYGDNAKAALMTRGIVEIARLGVKLGANPASFSGLTGIGDLIVTATSQHSRNWRAGNAIGRGEKLEDVLGNMGMVVEGVRACEAAHSLAKEAGVEMPITEALYNVLFEGKSPHDEVKKLMRRPQKHEMEQVFHFEE.

NADPH-binding residues include S11, W12, R32, and K106. Sn-glycerol 3-phosphate is bound by residues K106, G137, and T139. A141 is a binding site for NADPH. Positions 192, 245, 255, 256, and 257 each coordinate sn-glycerol 3-phosphate. K192 acts as the Proton acceptor in catalysis. Residue R256 coordinates NADPH. The NADPH site is built by V280 and E282.

It belongs to the NAD-dependent glycerol-3-phosphate dehydrogenase family.

Its subcellular location is the cytoplasm. The enzyme catalyses sn-glycerol 3-phosphate + NAD(+) = dihydroxyacetone phosphate + NADH + H(+). The catalysed reaction is sn-glycerol 3-phosphate + NADP(+) = dihydroxyacetone phosphate + NADPH + H(+). It functions in the pathway membrane lipid metabolism; glycerophospholipid metabolism. Its function is as follows. Catalyzes the reduction of the glycolytic intermediate dihydroxyacetone phosphate (DHAP) to sn-glycerol 3-phosphate (G3P), the key precursor for phospholipid synthesis. The polypeptide is Glycerol-3-phosphate dehydrogenase [NAD(P)+] (Exiguobacterium sp. (strain ATCC BAA-1283 / AT1b)).